The following is a 333-amino-acid chain: Elongation factor Ts, mitochondrial (333 aa).

The transit peptide at 1–17 (MLRTLRPTLPSRCLRLY) directs the protein to the mitochondrion.

Belongs to the EF-Ts family.

It is found in the mitochondrion. Functionally, associates with the EF-Tu.GDP complex and induces the exchange of GDP to GTP. It remains bound to the aminoacyl-tRNA.EF-Tu.GTP complex up to the GTP hydrolysis stage on the ribosome. The chain is Elongation factor Ts, mitochondrial from Coprinopsis cinerea (strain Okayama-7 / 130 / ATCC MYA-4618 / FGSC 9003) (Inky cap fungus).